Consider the following 602-residue polypeptide: Potassium voltage-gated channel subfamily A member 5 (602 aa).

A tetramerization domain region spans residues 1–202; the sequence is MEISLVPLEN…FYQLGDEAME (202 aa). Topologically, residues 1–238 are cytoplasmic; sequence MEISLVPLEN…LIFEYPESSG (238 aa). The tract at residues 58 to 107 is disordered; it reads EDANQGGRPLPPMAQELPQPRRLSAEDEEGEGDPGLGTVEEDQAPQDAGS. Ser81 carries the phosphoserine; by CK2 and PKA modification. Residue Lys212 forms a Glycyl lysine isopeptide (Lys-Gly) (interchain with G-Cter in SUMO) linkage. The chain crosses the membrane as a helical span at residues 239–260; sequence SARAIAIVSVLVILISIITFCL. The Extracellular segment spans residues 261-314; that stretch reads ETLPEFRDERELLRHPPVPPQPPAPAPGINGSVSGALSSGPTVAPLLPRTLADP. Residues 315–336 form a helical membrane-spanning segment; it reads FFIVETTCVIWFTFELLVRFFA. Residue Cys337 is the site of S-palmitoyl cysteine attachment. Residues 337–347 lie on the Cytoplasmic side of the membrane; sequence CPSKAEFSRNI. A helical transmembrane segment spans residues 348-368; sequence MNIIDVVAIFPYFITLGTELA. The Extracellular segment spans residues 369 to 384; that stretch reads EQQPGGGGQNGQQAMS. A helical; Voltage-sensor membrane pass occupies residues 385–405; it reads LAILRVIRLVRVFRIFKLSRH. Topologically, residues 406–420 are cytoplasmic; the sequence is SKGLQILGKTLQASM. The tract at residues 407-420 is S4-S5 linker; that stretch reads KGLQILGKTLQASM. Residues 421-442 form a helical membrane-spanning segment; sequence RELGLLIFFLFIGVILFSSAVY. Residues 443–456 are Extracellular-facing; sequence FAEADNHGSHFSSI. The helical intramembrane region spans 457–468; the sequence is PDAFWWAVVTMT. The Selectivity filter motif lies at 469 to 474; the sequence is TVGYGD. An intramembrane segment occupies 469-476; that stretch reads TVGYGDMR. At 477–483 the chain is on the extracellular side; the sequence is PITVGGK. The helical transmembrane segment at 484 to 512 threads the bilayer; sequence IVGSLCAIAGVLTIALPVPVIVSNFNYFY. The Cytoplasmic portion of the chain corresponds to 513–602; it reads HRETDHEEQA…CLDTSRETDL (90 aa). A compositionally biased stretch (basic and acidic residues) spans 523–536; sequence ALKEEQGNQRRESG. Positions 523-543 are disordered; it reads ALKEEQGNQRRESGLDTGGQR. Lys525 participates in a covalent cross-link: Glycyl lysine isopeptide (Lys-Gly) (interchain with G-Cter in SUMO). Ser535, Ser546, and Ser569 each carry phosphoserine; by PKA. Residues 600–602 carry the PDZ-binding motif; it reads TDL.

Belongs to the potassium channel family. A (Shaker) (TC 1.A.1.2) subfamily. Kv1.5/KCNA5 sub-subfamily. As to quaternary structure, homotetramer and heterotetramer of potassium channel proteins. Interacts with DLG1, which enhances channel currents. Forms a ternary complex with DLG1 and CAV3. Interacts with KCNAB1. Interacts with UBE2I. Interacts with XIRP2; the interaction is required for normal action potential configuration in the heart. Glycosylated. Post-translationally, sumoylated on Lys-212, and Lys-525, preferentially with SUMO3. Sumoylation regulates the voltage sensitivity of the channel. In terms of tissue distribution, expressed equally in atrium, ventricle, aorta and skeletal muscle. Weaker expression in brain.

It localises to the cell membrane. The catalysed reaction is K(+)(in) = K(+)(out). Its function is as follows. Voltage-gated potassium channel that mediates transmembrane potassium transport in excitable membranes. Forms tetrameric potassium-selective channels through which potassium ions pass in accordance with their electrochemical gradient. The channel alternates between opened and closed conformations in response to the voltage difference across the membrane. Can form functional homotetrameric channels and heterotetrameric channels that contain variable proportions of KCNA1, KCNA2, KCNA4, KCNA5, and possibly other family members as well; channel properties depend on the type of alpha subunits that are part of the channel. Channel properties are modulated by cytoplasmic beta subunits that regulate the subcellular location of the alpha subunits and promote rapid inactivation. Homotetrameric channels display rapid activation and slow inactivation. Required for normal electrical conduction including formation of the infranodal ventricular conduction system and normal action potential configuration, as a result of its interaction with XIRP2. May play a role in regulating the secretion of insulin in normal pancreatic islets. The chain is Potassium voltage-gated channel subfamily A member 5 (Kcna5) from Rattus norvegicus (Rat).